A 101-amino-acid polypeptide reads, in one-letter code: Protein S100-A7-like 2 (101 aa).

EF-hand domains lie at 13 to 48 (IVAMFRQYSGDDGRMDMPGLVNLMKENFPNFLSGCE) and 50 to 85 (SDMDYLSNALEKKDDNKDKKVNYSEFLSLLGDITID). Residues Asp63, Asn65, Asp67, Lys69, and Glu74 each contribute to the Ca(2+) site. Zn(2+) is bound by residues His87 and His91.

The protein belongs to the S-100 family.

This is Protein S100-A7-like 2 (S100A7L2) from Homo sapiens (Human).